Consider the following 323-residue polypeptide: tRNA U34 carboxymethyltransferase (323 aa).

Carboxy-S-adenosyl-L-methionine is bound by residues Lys91, Trp105, Lys110, Gly130, 180–181 (IE), Met196, Tyr200, and Arg315.

It belongs to the class I-like SAM-binding methyltransferase superfamily. CmoB family. Homotetramer.

The catalysed reaction is carboxy-S-adenosyl-L-methionine + 5-hydroxyuridine(34) in tRNA = 5-carboxymethoxyuridine(34) in tRNA + S-adenosyl-L-homocysteine + H(+). Its function is as follows. Catalyzes carboxymethyl transfer from carboxy-S-adenosyl-L-methionine (Cx-SAM) to 5-hydroxyuridine (ho5U) to form 5-carboxymethoxyuridine (cmo5U) at position 34 in tRNAs. In Citrifermentans bemidjiense (strain ATCC BAA-1014 / DSM 16622 / JCM 12645 / Bem) (Geobacter bemidjiensis), this protein is tRNA U34 carboxymethyltransferase.